The chain runs to 47 residues: GIACLCDSDGPSVRGNTLSGTYWLAGCPSGWHNCKSSGQLIGACCKQ.

3 cysteine pairs are disulfide-bonded: Cys4-Cys44, Cys6-Cys34, and Cys27-Cys45.

The protein belongs to the sea anemone sodium channel inhibitory toxin family. Type I subfamily.

The protein resides in the secreted. Its subcellular location is the nematocyst. Produces a positive inotropic effect in mammalian heart muscle. Modifies current passing through the fast sodium channel (Nav) in neuroblastoma cells, leading to delayed and incomplete inactivation. Paralyzes the shore crab (C.maenas) by tetanic contractions after intramuscular injection. The chain is Delta-actitoxin-Ael1b from Anthopleura elegantissima (Green aggregating anemone).